A 75-amino-acid polypeptide reads, in one-letter code: UPF0291 protein lin1342 (75 aa).

The disordered stretch occupies residues isoleucine 55–lysine 75. Basic residues predominate over residues histidine 65–lysine 75.

The protein belongs to the UPF0291 family.

The protein localises to the cytoplasm. The protein is UPF0291 protein lin1342 of Listeria innocua serovar 6a (strain ATCC BAA-680 / CLIP 11262).